A 102-amino-acid polypeptide reads, in one-letter code: Small ribosomal subunit protein uS10 (102 aa).

Belongs to the universal ribosomal protein uS10 family. Part of the 30S ribosomal subunit.

Involved in the binding of tRNA to the ribosomes. This Bacillus cereus (strain G9842) protein is Small ribosomal subunit protein uS10.